We begin with the raw amino-acid sequence, 250 residues long: MTNQKQTTHFGFKSVDWNEKEKKVAEVFHSVAKNYDRMNDLMSLGIHHLWKRYTIELSHVRPGQSVLDLAGGSGDLTRLLSQKVGDSGQVVLADINAAMLHVGRDRLLDEGLFKNIRYVQGNAQCLPFADNSFHCITMGFGLRNVTDKDEALQSMYRVCKPGGKLMVLEFSTPVFPGLKPVYDWYSFNILPKIGKFVANDEASYQYLAESIRMHPDQETLKAMIERVGFEDCHYHNLSGGIVALHIAYKY.

S-adenosyl-L-methionine is bound by residues Ser-73, Asp-94, and 122–123 (NA).

This sequence belongs to the class I-like SAM-binding methyltransferase superfamily. MenG/UbiE family.

It carries out the reaction a 2-demethylmenaquinol + S-adenosyl-L-methionine = a menaquinol + S-adenosyl-L-homocysteine + H(+). The catalysed reaction is a 2-methoxy-6-(all-trans-polyprenyl)benzene-1,4-diol + S-adenosyl-L-methionine = a 5-methoxy-2-methyl-3-(all-trans-polyprenyl)benzene-1,4-diol + S-adenosyl-L-homocysteine + H(+). It participates in quinol/quinone metabolism; menaquinone biosynthesis; menaquinol from 1,4-dihydroxy-2-naphthoate: step 2/2. It functions in the pathway cofactor biosynthesis; ubiquinone biosynthesis. In terms of biological role, methyltransferase required for the conversion of demethylmenaquinol (DMKH2) to menaquinol (MKH2) and the conversion of 2-polyprenyl-6-methoxy-1,4-benzoquinol (DDMQH2) to 2-polyprenyl-3-methyl-6-methoxy-1,4-benzoquinol (DMQH2). The protein is Ubiquinone/menaquinone biosynthesis C-methyltransferase UbiE of Legionella pneumophila (strain Paris).